The sequence spans 63 residues: Conotoxin LeDr243 (63 aa).

The first 22 residues, 1–22 (MRCLPVFVILLLLIASTPSIDA), serve as a signal peptide directing secretion. A propeptide spanning residues 23-47 (RPKTKDDMPLASFNDNAKRILQILS) is cleaved from the precursor. A Cysteine amide modification is found at Cys-60. Positions 62 to 63 (LG) are excised as a propeptide.

Belongs to the conotoxin T superfamily. Contains 2 disulfide bonds that can be either 'C1-C3, C2-C4' or 'C1-C4, C2-C3', since these disulfide connectivities have been observed for conotoxins with cysteine framework V (for examples, see AC P0DQQ7 and AC P81755). In terms of tissue distribution, expressed by the venom duct.

The protein resides in the secreted. This chain is Conotoxin LeDr243, found in Conus litteratus (Lettered cone).